Consider the following 1342-residue polypeptide: Receptor tyrosine-protein kinase erbB-3 (1342 aa).

Positions 1–19 (MRANDALQVLGLLFSLARG) are cleaved as a signal peptide. Residues 20–643 (SEVGNSQAVC…LVLIGKTHLT (624 aa)) are Extracellular-facing. Cys29 and Cys56 are oxidised to a cystine. The N-linked (GlcNAc...) asparagine glycan is linked to Asn126. 12 disulfides stabilise this stretch: Cys156–Cys183, Cys186–Cys194, Cys190–Cys202, Cys210–Cys218, Cys214–Cys226, Cys227–Cys235, Cys231–Cys243, Cys246–Cys255, Cys259–Cys286, Cys290–Cys301, Cys305–Cys320, and Cys323–Cys327. Asn250 carries N-linked (GlcNAc...) asparagine glycosylation. Residues Asn353, Asn408, Asn414, Asn437, and Asn469 are each glycosylated (N-linked (GlcNAc...) asparagine). 10 disulfide bridges follow: Cys500-Cys509, Cys504-Cys517, Cys520-Cys529, Cys533-Cys549, Cys552-Cys565, Cys556-Cys573, Cys576-Cys585, Cys589-Cys610, Cys613-Cys621, and Cys617-Cys629. Asn522 is a glycosylation site (N-linked (GlcNAc...) asparagine). N-linked (GlcNAc...) asparagine glycosylation occurs at Asn566. The N-linked (GlcNAc...) asparagine glycan is linked to Asn616. A helical transmembrane segment spans residues 644–664 (MALTVIAGLVVIFMMLGGTFL). Over 665–1342 (YWRGRRIQNK…LFPKANAQRT (678 aa)) the chain is Cytoplasmic. Position 686 is a phosphoserine (Ser686). The Protein kinase domain occupies 709 to 966 (LRKLKVLGSG…TFKELANEFT (258 aa)). Residues 715–723 (LGSGVFGTV), Lys742, 788–790 (QYL), and 834–839 (NLAARN) contribute to the ATP site. Catalysis depends on Asn834, which acts as the Proton acceptor. Disordered stretches follow at residues 980-999 (RESG…TNKK) and 1033-1152 (LPVG…PGLE). Ser982 carries the post-translational modification Phosphoserine. Polar residues predominate over residues 1042–1075 (RGSQSLLSPSSGYMPMNQGNLGESCQESAVSGSS).

Belongs to the protein kinase superfamily. Tyr protein kinase family. EGF receptor subfamily. As to quaternary structure, monomer and homodimer. Heterodimer with each of the other ERBB receptors (Potential). Interacts with CSPG5. Interacts with GRB7. Interacts with MUC1. Interacts with MYOC. Interacts with isoform 2 of PA2G4. Found in a ternary complex with NRG1 and ITGAV:ITGB3 or ITGA6:ITGB4. Post-translationally, autophosphorylated. Ligand-binding increases phosphorylation on tyrosine residues and promotes its association with the p85 subunit of phosphatidylinositol 3-kinase. In terms of tissue distribution, epithelial tissues and brain.

It localises to the cell membrane. Its subcellular location is the secreted. It catalyses the reaction L-tyrosyl-[protein] + ATP = O-phospho-L-tyrosyl-[protein] + ADP + H(+). Its function is as follows. Tyrosine-protein kinase that plays an essential role as cell surface receptor for neuregulins. Binds to neuregulin-1 (NRG1) and is activated by it; ligand-binding increases phosphorylation on tyrosine residues and promotes its association with the p85 subunit of phosphatidylinositol 3-kinase. May also be activated by CSPG5. Involved in the regulation of myeloid cell differentiation. This chain is Receptor tyrosine-protein kinase erbB-3 (ERBB3), found in Homo sapiens (Human).